A 274-amino-acid polypeptide reads, in one-letter code: uncharacterized protein (274 aa).

Residue 104–111 (GVFAIGKS) coordinates ATP.

This is an uncharacterized protein from Mycoplasma genitalium (strain ATCC 33530 / DSM 19775 / NCTC 10195 / G37) (Mycoplasmoides genitalium).